The primary structure comprises 2419 residues: Telomere-associated protein RIF1 (2419 aa).

Disordered regions lie at residues methionine 1 to glycine 24 and serine 373 to glycine 408. The segment covering serine 373–serine 385 has biased composition (polar residues). Serine 385, serine 391, serine 779, serine 976, and serine 1005 each carry phosphoserine. Threonine 1044 bears the Phosphothreonine mark. Low complexity predominate over residues serine 1184–serine 1198. Disordered stretches follow at residues serine 1184 to proline 1594 and arginine 1613 to lysine 1637. 2 stretches are compositionally biased toward polar residues: residues asparagine 1199–isoleucine 1217 and arginine 1228–aspartate 1255. Residue threonine 1215 is modified to Phosphothreonine. 2 positions are modified to phosphoserine: serine 1231 and serine 1233. Residues arginine 1263–serine 1272 show a composition bias toward basic and acidic residues. Residues alanine 1289–threonine 1302 show a composition bias toward polar residues. The span at histidine 1323–proline 1345 shows a compositional bias: basic and acidic residues. Serine 1407, serine 1439, serine 1457, and serine 1498 each carry phosphoserine. A compositionally biased stretch (basic and acidic residues) spans serine 1416 to aspartate 1455. Residues serine 1457–glycine 1467 show a composition bias toward polar residues. Threonine 1504 is modified (phosphothreonine). The span at asparagine 1507–leucine 1516 shows a compositional bias: basic and acidic residues. The segment covering arginine 1525 to asparagine 1537 has biased composition (polar residues). Serine 1528, serine 1538, serine 1540, serine 1542, and serine 1550 each carry phosphoserine. Residues arginine 1551–asparagine 1560 show a composition bias toward basic residues. Phosphoserine is present on residues serine 1562 and serine 1565. The segment covering glutamate 1572–methionine 1581 has biased composition (basic and acidic residues). Residues serine 1680 and serine 1683 each carry the phosphoserine modification. Threonine 1780 carries the phosphothreonine modification. The residue at position 1784 (serine 1784) is a Phosphoserine. The tract at residues alanine 1812–serine 1836 is disordered. Serine 1842 is subject to Phosphoserine. The interval aspartate 1882 to serine 2419 is interaction with condensed chromosomes in telophase. Disordered stretches follow at residues glutamate 1890–alanine 1914 and phenylalanine 1929–serine 1983. Residues serine 1931, serine 2094, serine 2109, serine 2121, serine 2125, serine 2144, serine 2153, serine 2208, serine 2287, serine 2341, serine 2413, and serine 2419 each carry the phosphoserine modification. Residues valine 2119–glutamate 2394 are interaction with ERCC6. The interval serine 2182–glutamine 2212 is disordered. The span at lysine 2189–glutamine 2212 shows a compositional bias: polar residues.

It belongs to the RIF1 family. Interacts with TP53BP1 (when phosphorylated by ATM). May interact with TRF2. Interacts with SHLD2. Interacts with ERCC6 (via WHD region). Interacts with ASTE1. As to expression, expressed in Sertoli cells, prospermatagonia, early primary spermatocytes, and in oocytes at all stages of their growth. Expressed in embryonic stem (ES) and embryonic germ (EG) cells: expression is lost upon differentiation.

Its subcellular location is the nucleus. The protein resides in the chromosome. It localises to the telomere. The protein localises to the cytoplasm. It is found in the cytoskeleton. Its subcellular location is the spindle. Its function is as follows. Key regulator of TP53BP1 that plays a key role in the repair of double-strand DNA breaks (DSBs) in response to DNA damage: acts by promoting non-homologous end joining (NHEJ)-mediated repair of DSBs. In response to DNA damage, interacts with ATM-phosphorylated TP53BP1. Interaction with TP53BP1 leads to dissociate the interaction between NUDT16L1/TIRR and TP53BP1, thereby unmasking the tandem Tudor-like domain of TP53BP1 and allowing recruitment to DNA DSBs. Once recruited to DSBs, RIF1 and TP53BP1 act by promoting NHEJ-mediated repair of DSBs. In the same time, RIF1 and TP53BP1 specifically counteract the function of BRCA1 by blocking DSBs resection via homologous recombination (HR) during G1 phase. Also required for immunoglobulin class-switch recombination (CSR) during antibody genesis, a process that involves the generation of DNA DSBs. Promotes NHEJ of dysfunctional telomeres. In Mus musculus (Mouse), this protein is Telomere-associated protein RIF1.